Consider the following 179-residue polypeptide: MAKLHDYYKDEVVKQLMSQFDYNSVMQVPRVEKITLNMGVGEAIADKKLLDNAAADLAAISGQKPFITKARKSVAGFKIRQGYPIGCKVTLRGERMWEFLERLITIAVPRIRDFRGLSAKSFDGRGNYSMGVREQIIFPEIDYDKVDRVRGLDITITTTAKSDDEGRALLAAFKFPFRK.

Belongs to the universal ribosomal protein uL5 family. Part of the 50S ribosomal subunit; part of the 5S rRNA/L5/L18/L25 subcomplex. Contacts the 5S rRNA and the P site tRNA. Forms a bridge to the 30S subunit in the 70S ribosome.

Its function is as follows. This is one of the proteins that bind and probably mediate the attachment of the 5S RNA into the large ribosomal subunit, where it forms part of the central protuberance. In the 70S ribosome it contacts protein S13 of the 30S subunit (bridge B1b), connecting the 2 subunits; this bridge is implicated in subunit movement. Contacts the P site tRNA; the 5S rRNA and some of its associated proteins might help stabilize positioning of ribosome-bound tRNAs. This is Large ribosomal subunit protein uL5 from Yersinia enterocolitica serotype O:8 / biotype 1B (strain NCTC 13174 / 8081).